The primary structure comprises 224 residues: Envelope glycoprotein L (224 aa).

Positions 1 to 19 are cleaved as a signal peptide; it reads MGILGWVGLIAVGVLCVRG. The interval 20–161 is interaction with gH; it reads GLPSTEYVIR…FDYSRTRRCV (142 aa). Residues 23–201 form the gL alphaherpesvirus-type domain; that stretch reads STEYVIRSRV…LTTPPPIIAT (179 aa). Disulfide bonds link Cys44/Cys76 and Cys149/Cys160. Residues 161 to 224 form a disordered region; sequence VGRQDLGPTN…RRRRPHSRRL (64 aa). Basic residues predominate over residues 213–224; it reads KSRRRRPHSRRL.

The protein belongs to the herpesviridae glycoprotein L (gL) family. Alphaherpesvirinae gL subfamily. Interacts with glycoprotein H (gH); this interaction is necessary for the correct processing and cell surface expression of gH. The heterodimer gH/gL seems to interact with gB trimers during fusion.

The protein localises to the virion membrane. It is found in the host cell membrane. Its subcellular location is the host Golgi apparatus. It localises to the host trans-Golgi network. In terms of biological role, the heterodimer glycoprotein H-glycoprotein L is required for the fusion of viral and plasma membranes leading to virus entry into the host cell. Acts as a functional inhibitor of gH and maintains gH in an inhibited form. Upon binding to host integrins, gL dissociates from gH leading to activation of the viral fusion glycoproteins gB and gH. The chain is Envelope glycoprotein L from Human herpesvirus 1 (strain 17) (HHV-1).